The following is a 716-amino-acid chain: uncharacterized protein (716 aa).

2 disordered regions span residues 84 to 103 (SPSI…ERYP) and 153 to 189 (VTDE…SQTQ). At Ser-97 the chain carries Phosphoserine. Residues Lys-201, Lys-204, Lys-237, Lys-283, and Lys-626 each participate in a glycyl lysine isopeptide (Lys-Gly) (interchain with G-Cter in SUMO2) cross-link.

This is an uncharacterized protein from Homo sapiens (Human).